The sequence spans 167 residues: Large ribosomal subunit protein bL9 (167 aa).

The protein belongs to the bacterial ribosomal protein bL9 family.

Its function is as follows. Binds to the 23S rRNA. This Chlamydia muridarum (strain MoPn / Nigg) protein is Large ribosomal subunit protein bL9.